The primary structure comprises 690 residues: MACLGSLHPLGSLLLLFLLLLLSPEARGEYGLVRVVSKNWSKDYCVLYSSDYVNLPRDLHHAPLLSLHDGTKTPWCPDEDSFHQAQDSSPRQRPLHQTTTMVTRGNCSFYAKGWLAQDQGAQGLLIVSRARNQQCSDTISKPQDPSKPWPALTIPVAVLRYTDMLDIVSHTYGDTDVRVAMFAPLEPVTDYNMAIIFILAVGTVAAGGYWAGLMEANKLQRRQAQRGGGLGGHNQQQTVAAERSQRAWEDDDFEDAPMDFTPAMTGAVVTMSCSIMILLYFFYDCFVYVMIGIFSLGASTGLYSCLAPILCHLPLWRYQWVLPGQRVSVTWPLLLLAGLCAMVTVLWVIHRNEDHWAWLLQDTLGVAYCLFVLRRVRLPTFKNCTLFLLALLAFDVFFVFITPLFTKTGESIMVEVASGPADSSSHERLPMVLKVPRLSFSALTLCNQPFSILGFGDIVVPGFLVAYCHRFDMQVQSRQVYYMACTVAYAVGLLVTFVAMILMQMGQPALLYLVSSTLLTSLAVATCRQEFTLFWTGQGRAKIPAEPVAQPCIASAVGSKMKLEDAKDSRTTNRFEQAVDGESGDLESSTGDDMAEMVTLSEDEATSPEGHSESSEGWSDTNLDPNELPSGSPMALEAMLIPLIQPIPHPSELGHIRTQSRVHDSSLPWMGLHKRKGLKVKKSMSAQAPL.

Positions 1 to 28 (MACLGSLHPLGSLLLLFLLLLLSPEARG) are cleaved as a signal peptide. The Lumenal segment spans residues 29–192 (EYGLVRVVSK…APLEPVTDYN (164 aa)). The PA domain maps to 87–166 (DSSPRQRPLH…AVLRYTDMLD (80 aa)). An N-linked (GlcNAc...) asparagine glycan is attached at Asn106. The helical transmembrane segment at 193 to 213 (MAIIFILAVGTVAAGGYWAGL) threads the bilayer. Over 214-260 (MEANKLQRRQAQRGGGLGGHNQQQTVAAERSQRAWEDDDFEDAPMDF) the chain is Cytoplasmic. Residues 261–283 (TPAMTGAVVTMSCSIMILLYFFY) traverse the membrane as a helical segment. Position 284 (Asp284) is a topological domain, lumenal. Residues 285–307 (CFVYVMIGIFSLGASTGLYSCLA) traverse the membrane as a helical segment. Over 308 to 328 (PILCHLPLWRYQWVLPGQRVS) the chain is Cytoplasmic. The chain crosses the membrane as a helical span at residues 329 to 349 (VTWPLLLLAGLCAMVTVLWVI). At 350–354 (HRNED) the chain is on the lumenal side. A helical transmembrane segment spans residues 355–373 (HWAWLLQDTLGVAYCLFVL). The Cytoplasmic portion of the chain corresponds to 374–384 (RRVRLPTFKNC). A helical membrane pass occupies residues 385–405 (TLFLLALLAFDVFFVFITPLF). The active site involves Asp395. At 406-448 (TKTGESIMVEVASGPADSSSHERLPMVLKVPRLSFSALTLCNQ) the chain is on the lumenal side. A helical membrane pass occupies residues 449 to 469 (PFSILGFGDIVVPGFLVAYCH). The active site involves Asp457. Topologically, residues 470–482 (RFDMQVQSRQVYY) are cytoplasmic. A helical transmembrane segment spans residues 483–503 (MACTVAYAVGLLVTFVAMILM). A topological domain (lumenal) is located at residue Gln504. Residues 505–525 (MGQPALLYLVSSTLLTSLAVA) traverse the membrane as a helical segment. A PAL motif is present at residues 508-510 (PAL). The Cytoplasmic portion of the chain corresponds to 526-690 (TCRQEFTLFW…KKSMSAQAPL (165 aa)). Residues 564-573 (EDAKDSRTTN) show a composition bias toward basic and acidic residues. Positions 564–633 (EDAKDSRTTN…DPNELPSGSP (70 aa)) are disordered. The segment covering 615–624 (SEGWSDTNLD) has biased composition (polar residues).

It belongs to the peptidase A22B family. In terms of assembly, interacts (via active sites) with FREY; the interaction stabilizes FREY1 protein and inhibits SPPL2C proteolytic activity. Post-translationally, glycosylated. In terms of tissue distribution, highly expressed in testis where it is primarily localised in spermatids (at protein level).

The protein localises to the endoplasmic reticulum membrane. Sperm-specific intramembrane-cleaving aspartic protease (I-CLiP) that cleaves distinct tail-anchored proteins and SNARE proteins. In elongated spermatids, modulates intracellular Ca(2+) homeostasis by controlling PLN abundance through proteolytic cleavage. During spermatogenesis, processes SNARE proteins and impacts vesicular trafficking which supports compartmental reorganization in maturating spermatids and may play a role in formation of the acrosome. Its function is as follows. In round spermatids, acts as a scaffold protein supporting FREY1 in IZUMO1 recruitment at the endoplasmic reticulum membrane and coordination of IZUMO1 complex assembly. Stabilizes FREY1 at the endoplasmic reticulum membrane through interaction. May recruit IZUMO1 interaction partners. Functionally, no difference in cleavage specificity compared to isoform 1. In Mus musculus (Mouse), this protein is Signal peptide peptidase-like 2C.